The chain runs to 210 residues: Putative Dihydrofolate reductase (210 aa).

Positions 4–184 (TLYCVVAVDT…IFYMFETYIK (181 aa)) constitute a DHFR domain.

The protein belongs to the dihydrofolate reductase family.

The catalysed reaction is (6S)-5,6,7,8-tetrahydrofolate + NADP(+) = 7,8-dihydrofolate + NADPH + H(+). The polypeptide is Putative Dihydrofolate reductase (ORF2) (Human herpesvirus 8 type P (isolate GK18) (HHV-8)).